The chain runs to 188 residues: UPF0461 protein C5orf24 (188 aa).

Over residues 1–10 (MMHPVASSNP) the composition is skewed to polar residues. The interval 1 to 20 (MMHPVASSNPAFCGPGKPSC) is disordered. Serine 37 is modified (phosphoserine). Residue lysine 75 forms a Glycyl lysine isopeptide (Lys-Gly) (interchain with G-Cter in SUMO2) linkage. Residues 79–142 (KKKKNLNRSG…GYKVSPGRPP (64 aa)) are disordered. Over residues 80–92 (KKKNLNRSGKRGR) the composition is skewed to basic residues. The segment covering 94 to 107 (SGTTKSAGYRTSTG) has biased composition (polar residues). Phosphoserine is present on residues serine 121 and serine 180. A Glycyl lysine isopeptide (Lys-Gly) (interchain with G-Cter in SUMO2) cross-link involves residue lysine 184.

The protein belongs to the UPF0461 family.

This is UPF0461 protein C5orf24 (C5orf24) from Homo sapiens (Human).